The chain runs to 391 residues: Phosphoglycerate kinase (391 aa).

Substrate is bound by residues 21–23 (DLN), R36, 59–62 (HLGR), R113, and R146. ATP contacts are provided by residues K197, E319, and 345–348 (GGDT).

It belongs to the phosphoglycerate kinase family. In terms of assembly, monomer.

Its subcellular location is the cytoplasm. The enzyme catalyses (2R)-3-phosphoglycerate + ATP = (2R)-3-phospho-glyceroyl phosphate + ADP. Its pathway is carbohydrate degradation; glycolysis; pyruvate from D-glyceraldehyde 3-phosphate: step 2/5. This is Phosphoglycerate kinase from Xanthomonas campestris pv. campestris (strain 8004).